The sequence spans 507 residues: Cytochrome P450 7B1 (507 aa).

The next 3 membrane-spanning stretches (helical) occupy residues 14 to 34 (PLAL…LFLL), 178 to 198 (IFAF…YGKI), and 287 to 307 (FLWA…YYIL). A heme-binding site is contributed by Cys447.

This sequence belongs to the cytochrome P450 family. Requires heme as cofactor. In terms of tissue distribution, highly expressed in brain structures including the corpus callosum, the anterior commissure and fornix. The hippocampal expression is particularly prominent in the dentate gyrus. Expressed in liver and kidney. The hepatic expression is sexually dimorphic, predominantly detected in male liver while barely detectable in females. Expressed in lymph nodes and spleens, in both lymphoid and stromal compartments. Higher expression is detected in fibroblastic reticular cells, a type of stromal cells in the lymph nodes. Also expressed at high levels in the outer follicle and at the B cell-T cell boundary of splenic germinal centers. Expressed in dendritic cells (DCs) subpopulations being most abundant in CD8-positive DCs.

It localises to the endoplasmic reticulum membrane. It is found in the microsome membrane. The enzyme catalyses 25-hydroxycholesterol + reduced [NADPH--hemoprotein reductase] + O2 = 7alpha,25-dihydroxycholesterol + oxidized [NADPH--hemoprotein reductase] + H2O + H(+). It catalyses the reaction (25R)-cholest-5-ene-3beta,26-diol + reduced [NADPH--hemoprotein reductase] + O2 = (25R)-cholest-5-en-3beta,7alpha,26-triol + oxidized [NADPH--hemoprotein reductase] + H2O + H(+). It carries out the reaction (24S)-hydroxycholesterol + reduced [NADPH--hemoprotein reductase] + O2 = (24S)-7alpha-dihydroxycholesterol + oxidized [NADPH--hemoprotein reductase] + H2O + H(+). The catalysed reaction is (24S)-25-epoxycholesterol + reduced [NADPH--hemoprotein reductase] + O2 = (24S,25)-epoxy-7alpha-hydroxycholesterol + oxidized [NADPH--hemoprotein reductase] + H2O + H(+). The enzyme catalyses (22R)-hydroxycholesterol + reduced [NADPH--hemoprotein reductase] + O2 = (22R,7alpha)-dihydroxycholesterol + oxidized [NADPH--hemoprotein reductase] + H2O + H(+). It catalyses the reaction androst-5-en-3beta,17beta-diol + reduced [NADPH--hemoprotein reductase] + O2 = androst-5-en-3beta,7alpha,17beta-triol + oxidized [NADPH--hemoprotein reductase] + H2O + H(+). It carries out the reaction 5alpha-androstane-3beta,17beta-diol + reduced [NADPH--hemoprotein reductase] + O2 = 5alpha-androstane-3beta,6alpha,17beta-triol + oxidized [NADPH--hemoprotein reductase] + H2O + H(+). The catalysed reaction is 3beta-hydroxyandrost-5-en-17-one + reduced [NADPH--hemoprotein reductase] + O2 = 3beta,7alpha-dihydroxyandrost-5-en-17-one + oxidized [NADPH--hemoprotein reductase] + H2O + H(+). The enzyme catalyses 3beta-hydroxy-5alpha-androstan-17-one + reduced [NADPH--hemoprotein reductase] + O2 = 3beta,7alpha-dihydroxy-5alpha-androstan-17-one + oxidized [NADPH--hemoprotein reductase] + H2O + H(+). It catalyses the reaction pregnenolone + reduced [NADPH--hemoprotein reductase] + O2 = 7alpha-hydroxypregnenolone + oxidized [NADPH--hemoprotein reductase] + H2O + H(+). It participates in lipid metabolism; bile acid biosynthesis. Its pathway is steroid hormone biosynthesis. Its activity is regulated as follows. Inhibited by drugs voriconazole and metyrapone. A cytochrome P450 monooxygenase involved in the metabolism of endogenous oxysterols and steroid hormones, including neurosteroids. Mechanistically, uses molecular oxygen inserting one oxygen atom into a substrate, and reducing the second into a water molecule, with two electrons provided by NADPH via cytochrome P450 reductase (CPR; NADPH-ferrihemoprotein reductase). Catalyzes the hydroxylation of carbon hydrogen bonds of steroids with a preference for 7-alpha position. Usually metabolizes steroids carrying a hydroxy group at position 3, functioning as a 3-hydroxy steroid 7-alpha hydroxylase. Hydroxylates oxysterols, including 25-hydroxycholesterol and (25R)-cholest-5-ene-3beta,26-diol toward 7-alpha hydroxy derivatives, which may be transported to the liver and converted to bile acids. Via its product 7-alpha,25-dihydroxycholesterol, a ligand for the chemotactic G protein-coupled receptor GPR183/EBI2, regulates B cell migration in germinal centers of lymphoid organs, thus guiding efficient maturation of plasma B cells and overall antigen-specific humoral immune response. 7-alpha hydroxylates neurosteroids, including 3beta-hydroxyandrost-5-en-17-one (dehydroepiandrosterone) and pregnenolone, both involved in hippocampus-associated memory and learning. Metabolizes androstanoids toward 6- or 7-alpha hydroxy derivatives. This Mus musculus (Mouse) protein is Cytochrome P450 7B1.